Here is a 311-residue protein sequence, read N- to C-terminus: Olfactory receptor 2M4 (311 aa).

At 1–25 the chain is on the extracellular side; the sequence is MVWENQTFNSIFILLGIFNHSPTHT. An N-linked (GlcNAc...) asparagine glycan is attached at Asn5. Residues 26-49 form a helical membrane-spanning segment; sequence FLFSLVLGIFSLALMENISMVLLI. The Cytoplasmic portion of the chain corresponds to 50–57; it reads YIEKQLHT. A helical membrane pass occupies residues 58–79; the sequence is PMYFLLSQLSLMDLMLICTTLP. At 80–100 the chain is on the extracellular side; that stretch reads KMIFSYLSGKKSISLAGCGTQ. Cys97 and Cys189 are joined by a disulfide. Residues 101 to 120 form a helical membrane-spanning segment; that stretch reads IFFYVSLLGAECFLLAVMAY. Residues 121-139 lie on the Cytoplasmic side of the membrane; that stretch reads DRYVAICHPLQYTILMNPK. Residues 140 to 158 form a helical membrane-spanning segment; it reads LCVFMTVASWTLGSLDGII. Residues 159–195 are Extracellular-facing; sequence VLAAVLSFSYCSSLEIHHFFCDVAALLPLSCTETSAF. The helical transmembrane segment at 196–219 threads the bilayer; it reads ERLLVICCVVMLIFPVSVIILSYS. Residues 220–236 are Cytoplasmic-facing; that stretch reads HVLRAVIHMGSGESRRK. The chain crosses the membrane as a helical span at residues 237–259; that stretch reads AFTTCSSHLSVVGLYYGAAMFMY. Topologically, residues 260 to 272 are extracellular; it reads MRPASKHTPDQDK. A helical membrane pass occupies residues 273–292; the sequence is MVSAFYTILTPMLNPLIYSL. The Cytoplasmic segment spans residues 293-311; it reads RNKEVFRALQKVLKKRKLI.

This sequence belongs to the G-protein coupled receptor 1 family.

It localises to the cell membrane. Its function is as follows. Odorant receptor. The protein is Olfactory receptor 2M4 (OR2M4) of Homo sapiens (Human).